A 274-amino-acid polypeptide reads, in one-letter code: Formamidopyrimidine-DNA glycosylase (274 aa).

Catalysis depends on P2, which acts as the Schiff-base intermediate with DNA. E3 acts as the Proton donor in catalysis. K57 functions as the Proton donor; for beta-elimination activity in the catalytic mechanism. Positions 92, 111, and 152 each coordinate DNA. The FPG-type zinc finger occupies Q237–R271. R261 acts as the Proton donor; for delta-elimination activity in catalysis.

The protein belongs to the FPG family. In terms of assembly, monomer. It depends on Zn(2+) as a cofactor.

It carries out the reaction Hydrolysis of DNA containing ring-opened 7-methylguanine residues, releasing 2,6-diamino-4-hydroxy-5-(N-methyl)formamidopyrimidine.. The enzyme catalyses 2'-deoxyribonucleotide-(2'-deoxyribose 5'-phosphate)-2'-deoxyribonucleotide-DNA = a 3'-end 2'-deoxyribonucleotide-(2,3-dehydro-2,3-deoxyribose 5'-phosphate)-DNA + a 5'-end 5'-phospho-2'-deoxyribonucleoside-DNA + H(+). Involved in base excision repair of DNA damaged by oxidation or by mutagenic agents. Acts as a DNA glycosylase that recognizes and removes damaged bases. Has a preference for oxidized purines, such as 7,8-dihydro-8-oxoguanine (8-oxoG). Has AP (apurinic/apyrimidinic) lyase activity and introduces nicks in the DNA strand. Cleaves the DNA backbone by beta-delta elimination to generate a single-strand break at the site of the removed base with both 3'- and 5'-phosphates. In Glaesserella parasuis serovar 5 (strain SH0165) (Haemophilus parasuis), this protein is Formamidopyrimidine-DNA glycosylase.